The following is a 272-amino-acid chain: Octanoyltransferase (272 aa).

Polar residues predominate over residues 1–12; the sequence is MQQDPPTSQPHT. A disordered region spans residues 1-20; the sequence is MQQDPPTSQPHTPQIVDGVK. The BPL/LPL catalytic domain occupies 65 to 255; it reads HQRPNTVIYV…EMMSFQPYEM (191 aa). Residues 103–110, 175–177, and 188–190 each bind substrate; these read RGGEITWH, AIG, and GFA. The active-site Acyl-thioester intermediate is the Cys206.

The protein belongs to the LipB family.

The protein localises to the cytoplasm. It catalyses the reaction octanoyl-[ACP] + L-lysyl-[protein] = N(6)-octanoyl-L-lysyl-[protein] + holo-[ACP] + H(+). It functions in the pathway protein modification; protein lipoylation via endogenous pathway; protein N(6)-(lipoyl)lysine from octanoyl-[acyl-carrier-protein]: step 1/2. In terms of biological role, catalyzes the transfer of endogenously produced octanoic acid from octanoyl-acyl-carrier-protein onto the lipoyl domains of lipoate-dependent enzymes. Lipoyl-ACP can also act as a substrate although octanoyl-ACP is likely to be the physiological substrate. This is Octanoyltransferase from Cutibacterium acnes (strain DSM 16379 / KPA171202) (Propionibacterium acnes).